Here is a 426-residue protein sequence, read N- to C-terminus: MTLKMIGCSHHDAAVEIREQLSFTENEINRTFELFGQRFADAELVLLSTCNRVELYGAGSNPASLQSDDLIDLVADCLNQSRDFVANHMIIREGREAVEHLFLVAASLDSMVVGEAQILSQVKQSYDLANDADRTGPITHGVFQAANRTAKRVQTETSIHRRRLSVPSVAIGEVVPEVFNRLQGKRVVLCGAGEMAEETLRYLKNGGANNLCVVNRSLDRAQKLADEFGADAESMDSLHDQIVQADLLIGTTSAEEPIVDASTFAALNAKRGGRIMLVLDLAVPRDFDPVIGDEPGVYLYQIDDLQAACNRNRREREKQWPKAKKIIDEEVDGFFQSLQQRATGPVIRRLRERADKVKAEELQRLFGKLNGSTDTAMQKEIEKSFDRLTNKLLHPPMASLRDDAADGHSRGLLEALRHLFNLGEDS.

Substrate contacts are provided by residues 49 to 52 (TCNR), Ser110, 115 to 117 (EAQ), and Gln121. The active-site Nucleophile is Cys50. 191–196 (GAGEMA) contacts NADP(+).

The protein belongs to the glutamyl-tRNA reductase family. In terms of assembly, homodimer.

The enzyme catalyses (S)-4-amino-5-oxopentanoate + tRNA(Glu) + NADP(+) = L-glutamyl-tRNA(Glu) + NADPH + H(+). It participates in porphyrin-containing compound metabolism; protoporphyrin-IX biosynthesis; 5-aminolevulinate from L-glutamyl-tRNA(Glu): step 1/2. Its function is as follows. Catalyzes the NADPH-dependent reduction of glutamyl-tRNA(Glu) to glutamate 1-semialdehyde (GSA). This chain is Glutamyl-tRNA reductase, found in Rhodopirellula baltica (strain DSM 10527 / NCIMB 13988 / SH1).